Here is a 317-residue protein sequence, read N- to C-terminus: MGEEHPRKRSRQHFEAEARNVSLFESPQCETSKWYFSREEIERFSPSRKDGIDLVKESFLRSSYCTFLQRLGMKLHVSQVTISCAMVMCHRFYMRQSHAKNDWQTIATSSLFLACKAEDEPCQLSSVVVASYEIIYEWDPSASIRIHQTECYHEFKEIILSGESLLLSTSAFHLDIELPYKPLAAALNRLNAWPDLATAAWNFVHDWIRTTLCLQYKPHVIATATVHLAATFQNAKVGSRRDWWLEFGVTTKLLKEVIQEMCTLIEVDRRRNMPPPPPPPRRELSWAIPAAVKPVHMARAYPFHSYPLQSYRQAGIW.

The protein belongs to the cyclin family. Cyclin T subfamily. In terms of assembly, interacts with CDKC-1 and CDKC-2. Abundantly expressed in flowers. Expressed in roots, seedlings, rosettes and stems.

This Arabidopsis thaliana (Mouse-ear cress) protein is Cyclin-T1-3 (CYCT1-3).